Consider the following 245-residue polypeptide: Tyrosine recombinase XerD-like (245 aa).

A Core-binding (CB) domain is found at 1–72 (MITFISKFLA…AVNQFLFFLY (72 aa)). The 156-residue stretch at 90-245 (PLLTPAYQEV…PVTLEKYFKN (156 aa)) folds into the Tyr recombinase domain. Active-site residues include Lys151 and Arg210. The active-site O-(3'-phospho-DNA)-tyrosine intermediate is the Tyr242.

The protein belongs to the 'phage' integrase family. XerD-like subfamily.

The protein resides in the cytoplasm. Putative tyrosine recombinase. Not involved in the cutting and rejoining of the recombining DNA molecules on dif(SL) site. The protein is Tyrosine recombinase XerD-like of Streptococcus mutans serotype c (strain ATCC 700610 / UA159).